Here is a 307-residue protein sequence, read N- to C-terminus: CRISPR-associated endonuclease Cas1 2 (307 aa).

Residues Glu142, His206, and Glu221 each contribute to the Mn(2+) site.

Belongs to the CRISPR-associated endonuclease Cas1 family. As to quaternary structure, homodimer, forms a heterotetramer with a Cas2 homodimer. Forms oligomers, probably binds nucleic acids as a homodimer. It depends on Mg(2+) as a cofactor. Requires Mn(2+) as cofactor.

Functionally, CRISPR (clustered regularly interspaced short palindromic repeat), is an adaptive immune system that provides protection against mobile genetic elements (viruses, transposable elements and conjugative plasmids). CRISPR clusters contain spacers, sequences complementary to antecedent mobile elements, and target invading nucleic acids. CRISPR clusters are transcribed and processed into CRISPR RNA (crRNA). Acts as a dsDNA endonuclease. Involved in the integration of spacer DNA into the CRISPR cassette. Its function is as follows. In vitro catalyzes a concerted transesterification reaction on branched DNA, as would be expected during integration of protospacers into the CRISPR leader sequence; Cas2 is not required in vitro. This reaction requires a 3'-OH group at the branch point. Binds ss- and dsDNA and ss- and dsRNA with approximately equal affinity. May be able to anneal complementary DNA strands. This chain is CRISPR-associated endonuclease Cas1 2, found in Saccharolobus solfataricus (strain ATCC 35092 / DSM 1617 / JCM 11322 / P2) (Sulfolobus solfataricus).